Here is a 197-residue protein sequence, read N- to C-terminus: Isopentenyl-diphosphate Delta-isomerase (197 aa).

Residues His-41 and His-48 each contribute to the Mn(2+) site. The region spanning 46–183 (QLHRAFSVFL…SWFMTVLDAA (138 aa)) is the Nudix hydrolase domain. Cys-83 is an active-site residue. Cys-83 contacts Mg(2+). His-85 lines the Mn(2+) pocket. Residue Glu-103 participates in Mg(2+) binding. Residues Glu-130 and Glu-132 each contribute to the Mn(2+) site. Residue Glu-132 is part of the active site.

The protein belongs to the IPP isomerase type 1 family. Requires Mg(2+) as cofactor. Mn(2+) serves as cofactor.

The protein resides in the cytoplasm. The catalysed reaction is isopentenyl diphosphate = dimethylallyl diphosphate. It functions in the pathway isoprenoid biosynthesis; dimethylallyl diphosphate biosynthesis; dimethylallyl diphosphate from isopentenyl diphosphate: step 1/1. Its function is as follows. Catalyzes the 1,3-allylic rearrangement of the homoallylic substrate isopentenyl (IPP) to its highly electrophilic allylic isomer, dimethylallyl diphosphate (DMAPP). The chain is Isopentenyl-diphosphate Delta-isomerase from Streptomyces avermitilis (strain ATCC 31267 / DSM 46492 / JCM 5070 / NBRC 14893 / NCIMB 12804 / NRRL 8165 / MA-4680).